A 188-amino-acid chain; its full sequence is Augmin complex subunit dgt4 (188 aa).

Residues 141–163 (QREFAQNQEALRSLRTAVDGLEN) are a coiled coil.

Component of the augmin complex composed of dgt2, dgt3, dgt4, dgt5, dgt6, msd1, msd5 and wac. The complex interacts directly or indirectly with microtubules and is required for centrosome-independent generation of spindle microtubules.

The protein resides in the cytoplasm. The protein localises to the cytoskeleton. It localises to the spindle. Functionally, as part of the augmin complex, plays a role in centrosome-independent generation of spindle microtubules. The complex is required for mitotic spindle assembly through its involvement in localizing gamma-tubulin to spindle microtubules. This is Augmin complex subunit dgt4 from Drosophila melanogaster (Fruit fly).